The primary structure comprises 426 residues: Histidine--tRNA ligase (426 aa).

It belongs to the class-II aminoacyl-tRNA synthetase family. Homodimer.

Its subcellular location is the cytoplasm. It carries out the reaction tRNA(His) + L-histidine + ATP = L-histidyl-tRNA(His) + AMP + diphosphate + H(+). The sequence is that of Histidine--tRNA ligase from Geobacillus kaustophilus (strain HTA426).